Consider the following 363-residue polypeptide: Double-strand-specific pac1 ribonuclease (363 aa).

2 disordered regions span residues 1 to 35 (MGRFKRHHEGDSDSSSSASDSLSRGRRSLGHKRSS) and 92 to 138 (SRHD…PPLR). Residues 13 to 22 (DSSSSASDSL) are compositionally biased toward low complexity. The segment covering 24-35 (RGRRSLGHKRSS) has biased composition (basic residues). Ser-122 is modified (phosphoserine). The RNase III domain maps to 139–262 (SEKLKEQVFM…YLGALILDGQ (124 aa)). Residues 285 to 356 (RPIDKLAKSK…AMQALEVLAK (72 aa)) form the DRBM domain.

Requires Mg(2+) as cofactor.

It carries out the reaction Endonucleolytic cleavage to 5'-phosphomonoester.. Digests double-stranded RNA. Converts long double-stranded RNAs into short oligonucleotides, leaving 5'-phosphates on their cleavage products. Probably inhibits mating and meiosis by degrading a specific mRNA required for sexual development. The sequence is that of Double-strand-specific pac1 ribonuclease (pac1) from Schizosaccharomyces pombe (strain 972 / ATCC 24843) (Fission yeast).